The following is a 267-amino-acid chain: Type III pantothenate kinase (267 aa).

6–13 (DSGNSRLK) contributes to the ATP binding site. Residues Y96 and 103–106 (GADR) contribute to the substrate site. D105 functions as the Proton acceptor in the catalytic mechanism. T131 lines the ATP pocket. T181 is a substrate binding site.

This sequence belongs to the type III pantothenate kinase family. In terms of assembly, homodimer. It depends on NH4(+) as a cofactor. The cofactor is K(+).

It localises to the cytoplasm. The catalysed reaction is (R)-pantothenate + ATP = (R)-4'-phosphopantothenate + ADP + H(+). Its pathway is cofactor biosynthesis; coenzyme A biosynthesis; CoA from (R)-pantothenate: step 1/5. Functionally, catalyzes the phosphorylation of pantothenate (Pan), the first step in CoA biosynthesis. In Bordetella bronchiseptica (strain ATCC BAA-588 / NCTC 13252 / RB50) (Alcaligenes bronchisepticus), this protein is Type III pantothenate kinase.